Consider the following 442-residue polypeptide: tRNA modification GTPase MnmE (442 aa).

R27, E84, and K124 together coordinate (6S)-5-formyl-5,6,7,8-tetrahydrofolate. One can recognise a TrmE-type G domain in the interval 221 to 366 (GLHVVIVGAP…LLDALQAFAE (146 aa)). GTP contacts are provided by residues 231–236 (NAGKSS), 250–256 (SEEAGTT), and 275–278 (DTAG). Residues S235 and T256 each contribute to the Mg(2+) site. Residue K442 coordinates (6S)-5-formyl-5,6,7,8-tetrahydrofolate.

Belongs to the TRAFAC class TrmE-Era-EngA-EngB-Septin-like GTPase superfamily. TrmE GTPase family. As to quaternary structure, homodimer. Heterotetramer of two MnmE and two MnmG subunits. It depends on K(+) as a cofactor.

Its subcellular location is the cytoplasm. In terms of biological role, exhibits a very high intrinsic GTPase hydrolysis rate. Involved in the addition of a carboxymethylaminomethyl (cmnm) group at the wobble position (U34) of certain tRNAs, forming tRNA-cmnm(5)s(2)U34. The protein is tRNA modification GTPase MnmE of Brucella suis (strain ATCC 23445 / NCTC 10510).